Consider the following 323-residue polypeptide: tRNA-dihydrouridine(16) synthase (323 aa).

FMN is bound by residues 7–9 (PME) and Gln-68. Cys-98 serves as the catalytic Proton donor. FMN-binding positions include Lys-139, 199–201 (NGE), and 223–224 (GR).

This sequence belongs to the Dus family. DusC subfamily. Requires FMN as cofactor.

The enzyme catalyses 5,6-dihydrouridine(16) in tRNA + NADP(+) = uridine(16) in tRNA + NADPH + H(+). It carries out the reaction 5,6-dihydrouridine(16) in tRNA + NAD(+) = uridine(16) in tRNA + NADH + H(+). Its function is as follows. Catalyzes the synthesis of 5,6-dihydrouridine (D), a modified base found in the D-loop of most tRNAs, via the reduction of the C5-C6 double bond in target uridines. Specifically modifies U16 in tRNAs. The polypeptide is tRNA-dihydrouridine(16) synthase (Pseudomonas putida (strain ATCC 47054 / DSM 6125 / CFBP 8728 / NCIMB 11950 / KT2440)).